The sequence spans 201 residues: GTP-binding protein ryh1 (201 aa).

18–25 (GEQSVGKT) provides a ligand contact to GTP. The Effector region motif lies at 40–48 (YQATIGIDF). Residues 66–70 (DTAGQ) and 124–127 (NKTD) contribute to the GTP site. 2 S-geranylgeranyl cysteine lipidation sites follow: Cys-199 and Cys-201. Residue Cys-201 is modified to Cysteine methyl ester.

Belongs to the small GTPase superfamily. Rab family.

It is found in the endosome membrane. It localises to the golgi apparatus membrane. Its subcellular location is the nucleus. The protein resides in the cytoplasm. The protein localises to the cytosol. Functionally, has a role in retrograde traffricking of proteins from the endosome to the Golgi. Involved in protein transport to the plasma membrane. Involved in the secretory pathway where it has a role in acid phosphatase secretion. Required also in normal glycosylation trafficking pathways. The protein is GTP-binding protein ryh1 (ryh1) of Schizosaccharomyces pombe (strain 972 / ATCC 24843) (Fission yeast).